The chain runs to 186 residues: MAETSSLISGVAQRCAGSLFELALDANSVASVEKDLGRFEALLSGSEDLRRLISSPVFSSEDQLHAIGAIADKAGIKGLVGNFLRVVAQNRRLFALPGIIAAFRQIAAEHRGEISADVVSAHELTSAQQNELKATLKGVAGKDVTINVTVDPSILGGLIVKMGSRQIDTSLRTKLSSLKLALKEVG.

The protein belongs to the ATPase delta chain family. In terms of assembly, F-type ATPases have 2 components, F(1) - the catalytic core - and F(0) - the membrane proton channel. F(1) has five subunits: alpha(3), beta(3), gamma(1), delta(1), epsilon(1). F(0) has three main subunits: a(1), b(2) and c(10-14). The alpha and beta chains form an alternating ring which encloses part of the gamma chain. F(1) is attached to F(0) by a central stalk formed by the gamma and epsilon chains, while a peripheral stalk is formed by the delta and b chains.

It is found in the cell inner membrane. Its function is as follows. F(1)F(0) ATP synthase produces ATP from ADP in the presence of a proton or sodium gradient. F-type ATPases consist of two structural domains, F(1) containing the extramembraneous catalytic core and F(0) containing the membrane proton channel, linked together by a central stalk and a peripheral stalk. During catalysis, ATP synthesis in the catalytic domain of F(1) is coupled via a rotary mechanism of the central stalk subunits to proton translocation. In terms of biological role, this protein is part of the stalk that links CF(0) to CF(1). It either transmits conformational changes from CF(0) to CF(1) or is implicated in proton conduction. The sequence is that of ATP synthase subunit delta from Brucella melitensis biotype 2 (strain ATCC 23457).